We begin with the raw amino-acid sequence, 824 residues long: Spindle-defective protein 2 (824 aa).

Acidic residues-rich tracts occupy residues 16 to 27 (EIEDSPIDDNDN) and 35 to 44 (GDVELEEEEV). Residues 16-98 (EIEDSPIDDN…SRPASVMSDK (83 aa)) are disordered. Polar residues predominate over residues 59-70 (TNMTNPKVNDLT). The span at 81 to 98 (SAASSRSASRPASVMSDK) shows a compositional bias: low complexity. The stretch at 111–131 (ENAIEEYTNQVFADENKADLL) forms a coiled coil. Residues 189–252 (RAKPGANDNE…GQYQGPNFDL (64 aa)) form a disordered region. The span at 207–225 (NVPTTSDKSAFITSPMNST) shows a compositional bias: polar residues. A coiled-coil region spans residues 304–324 (NNKNQDLFAALEEARKRRAAQ). Disordered regions lie at residues 342–372 (KPTSARHSGNVVSSTSNDNTTAASSKDLTTS) and 433–455 (NNGNVSLSHGRDGRDSVSSVRTM). A compositionally biased stretch (low complexity) spans 349–366 (SGNVVSSTSNDNTTAASS).

As to quaternary structure, interacts with sas-7 (via C-terminus); may be recruited to centrioles by sas-7.

The protein resides in the cytoplasm. The protein localises to the cytoskeleton. Its subcellular location is the microtubule organizing center. It is found in the centrosome. It localises to the centriole. In terms of biological role, required both for centrosome duplication and maturation. Required for pericentriolar material (PCM) recruitment. This Caenorhabditis elegans protein is Spindle-defective protein 2.